The chain runs to 131 residues: Sec-independent protein translocase protein TatB (131 aa).

The chain crosses the membrane as a helical span at residues 2-22 (FDGIGFMELLLIGVLGLVVLG). Residues 69–131 (NQGLKNLAPE…ENAKSDKPNG (63 aa)) form a disordered region. Residues 105–123 (AKETPAKETATTETTSTEN) are compositionally biased toward low complexity.

It belongs to the TatB family. As to quaternary structure, the Tat system comprises two distinct complexes: a TatABC complex, containing multiple copies of TatA, TatB and TatC subunits, and a separate TatA complex, containing only TatA subunits. Substrates initially bind to the TatABC complex, which probably triggers association of the separate TatA complex to form the active translocon.

The protein resides in the cell inner membrane. In terms of biological role, part of the twin-arginine translocation (Tat) system that transports large folded proteins containing a characteristic twin-arginine motif in their signal peptide across membranes. Together with TatC, TatB is part of a receptor directly interacting with Tat signal peptides. TatB may form an oligomeric binding site that transiently accommodates folded Tat precursor proteins before their translocation. This Shewanella piezotolerans (strain WP3 / JCM 13877) protein is Sec-independent protein translocase protein TatB.